Here is a 297-residue protein sequence, read N- to C-terminus: MRVLDEIAESPFLISPLNPNSTANGYRWVDKCHGFLHNTVLVAASLFFVAYLAYEAKKSLSKLSNRRSYIMIAYYGCLWLVSLLNLAWCCLQGWECTPGKEVVWNLLTLFTTSGMLFLEVSLVAFLFQGNYASGAEALTRTFLISGFIVALDLLLKAIFLFGFGVPLFIDNNENGKTFKWGLWIIHKLLLTGVYGMVFLMYNSRWREKLPARPAFYNYIIIMFALYSLYLVASAFTANNAHFGFWLYGIMSVCYHALYLPLLYITFLADFFQEEDLNLENVYYSEMKDAGFFDSDWE.

Asn20 carries N-linked (GlcNAc...) asparagine glycosylation. 7 helical membrane passes run 34–54 (GFLH…YLAY), 70–90 (IMIA…AWCC), 107–127 (LTLF…AFLF), 142–162 (FLIS…FLFG), 180–200 (WGLW…VFLM), 215–235 (FYNY…ASAF), and 242–262 (FGFW…LPLL).

This sequence belongs to the UPF0359 family.

The protein resides in the membrane. In terms of biological role, G-protein coupled receptor. Plays a role in plants and microbes interactions. In Arabidopsis thaliana (Mouse-ear cress), this protein is Protein CANDIDATE G-PROTEIN COUPLED RECEPTOR 8.